Here is a 300-residue protein sequence, read N- to C-terminus: tRNA pseudouridine synthase B (300 aa).

D44 functions as the Nucleophile in the catalytic mechanism.

Belongs to the pseudouridine synthase TruB family. Type 1 subfamily.

The enzyme catalyses uridine(55) in tRNA = pseudouridine(55) in tRNA. Functionally, responsible for synthesis of pseudouridine from uracil-55 in the psi GC loop of transfer RNAs. This is tRNA pseudouridine synthase B from Corynebacterium diphtheriae (strain ATCC 700971 / NCTC 13129 / Biotype gravis).